We begin with the raw amino-acid sequence, 325 residues long: Hexaprenyl-diphosphate synthase large subunit ((2E,6E)-farnesyl-diphosphate specific) (325 aa).

Residues Lys-45, Arg-48, and His-77 each contribute to the isopentenyl diphosphate site. Residues Asp-84, Asp-88, and Arg-93 each contribute to the all-trans-hexaprenyl diphosphate site. Positions 84 and 88 each coordinate Mg(2+). Isopentenyl diphosphate is bound at residue Arg-94. All-trans-hexaprenyl diphosphate-binding residues include Lys-170, Thr-171, and Gln-208.

Belongs to the FPP/GGPP synthase family. Dimer of heterodimer or heterotetramer composed of a small (Hexs-a) and large (Hexs-B) subunit. Mg(2+) serves as cofactor.

The enzyme catalyses 3 isopentenyl diphosphate + (2E,6E)-farnesyl diphosphate = all-trans-hexaprenyl diphosphate + 3 diphosphate. Catalyzes the condensation of three molecules of isopentenyl diphosphate with farnesyl diphosphate (FPP) to yield (all-E)-hexaprenyl diphosphate (HexPP; C30), the precursor of the prenyl side chain of menaquinone-6. Large subunit Hexs-B catalyzes the condensation reaction and the final product chain length is cooperatively regulated by both the Hexs-A and Hexs-B subunits using the whole size of the hydrophobic cleft as a ruler. The chain is Hexaprenyl-diphosphate synthase large subunit ((2E,6E)-farnesyl-diphosphate specific) (hexs-b) from Micrococcus luteus (Micrococcus lysodeikticus).